The chain runs to 596 residues: Chaperone protein DnaK (596 aa).

A Phosphothreonine; by autocatalysis modification is found at T180.

The protein belongs to the heat shock protein 70 family.

In terms of biological role, acts as a chaperone. This is Chaperone protein DnaK from Thermotoga neapolitana (strain ATCC 49049 / DSM 4359 / NBRC 107923 / NS-E).